A 594-amino-acid chain; its full sequence is Protein wntless (594 aa).

Topologically, residues 1 to 13 are cytoplasmic; the sequence is MSGTILENLSGRK. Residues 14 to 34 traverse the membrane as a helical segment; sequence LSILVATLLLCQVLCFLLGGL. The Lumenal portion of the chain corresponds to 35–239; the sequence is YAPLPAGHVT…AIHQNGGFTQ (205 aa). Residue Asn58 is glycosylated (N-linked (GlcNAc...) asparagine). Residues 240–260 traverse the membrane as a helical segment; sequence IWLLLKTMLFPFVVGIMIWFW. Topologically, residues 261–270 are cytoplasmic; it reads RRVHLLQRSP. Residues 271–291 traverse the membrane as a helical segment; it reads ALLEYMLIYLGAALTFLNLPL. The Lumenal portion of the chain corresponds to 292 to 311; that stretch reads EYLSLVYEMPYMLLLSDIRQ. The chain crosses the membrane as a helical span at residues 312–332; sequence GIFYAMLLTFWLVFAGEHMLI. Over 333–344 the chain is Cytoplasmic; it reads QDAPNKSTIRSR. Residues 345–365 form a helical membrane-spanning segment; the sequence is YWKHLSAVVVGCISLFVFDIC. Residues 366–390 are Lumenal-facing; the sequence is ERGVQLRNPFYSIWTTPLGAKVAMT. A helical membrane pass occupies residues 391 to 411; sequence FIVLAGVSAAIYFLFLCYMIW. Residues 412–473 lie on the Cytoplasmic side of the membrane; the sequence is KVFRNIGDKR…ANESKGLIYR (62 aa). The chain crosses the membrane as a helical span at residues 474–494; that stretch reads FKFLMLATLVCAALTVAGFIM. At 495-514 the chain is on the lumenal side; it reads GQMAEGQWDWNDNVAIQPTS. A helical membrane pass occupies residues 515-535; it reads AFLTGVYGMWNIYIFALLILY. Residues 536 to 594 lie on the Cytoplasmic side of the membrane; that stretch reads APSHKQWPTMHHSDETTQSNENIVASAASEEIEFSHLPSDSNPSEISSLTSFTRKVAFD. Residues 571 to 594 are disordered; the sequence is HLPSDSNPSEISSLTSFTRKVAFD. Residues 573-588 show a composition bias toward polar residues; sequence PSDSNPSEISSLTSFT.

This sequence belongs to the wntless family. In terms of assembly, interacts with wg; in the Golgi. Interacts with Vps35, a component of the retromer complex; wls stability is regulated by Vps35. As to expression, ubiquitously expressed in the wing imaginal disk, increased expression is observed in a stripe at the dorso-ventral boundary and other regions of the wing disk that express wg. Also expresses in the leg imaginal disk. During larval development, expression is seen in both motorneurons and muscle.

Its subcellular location is the presynaptic cell membrane. It is found in the postsynaptic cell membrane. The protein localises to the cell membrane. It localises to the endosome membrane. The protein resides in the endoplasmic reticulum membrane. Its subcellular location is the golgi apparatus membrane. Functionally, a segment polarity gene required for wingless (wg)-dependent patterning processes, acting in both wg-sending cells and wg-target cells. In non-neuronal cells wls directs wg secretion. The wls traffic loop encompasses the Golgi, the cell surface, an endocytic compartment and a retrograde route leading back to the Golgi, and involves clathrin-mediated endocytosis and the retromer complex (a conserved protein complex consisting of Vps35 and Vps26). In neuronal cells (the larval motorneuron NMJ), the wg signal moves across the synapse via the release of wls-containing exosome-like vesicles. Postsynaptic wls is required for the trafficking of fz2 through the fz2-interacting protein Grip. The polypeptide is Protein wntless (Drosophila melanogaster (Fruit fly)).